Reading from the N-terminus, the 436-residue chain is KICSTOR complex protein kaptin (436 aa).

Position 1 is an N-acetylmethionine (M1).

As to quaternary structure, part of the KICSTOR complex composed of KPTN, ITFG2, KICS2 and SZT2. SZT2 probably serves as a link between the other three proteins in the KICSTOR complex and mediates the direct interaction with the GATOR1 complex. May associate with F-actin filaments.

The protein localises to the lysosome membrane. Its subcellular location is the cell projection. It localises to the lamellipodium. The protein resides in the stereocilium. Functionally, as part of the KICSTOR complex functions in the amino acid-sensing branch of the TORC1 signaling pathway. Recruits, in an amino acid-independent manner, the GATOR1 complex to the lysosomal membranes and allows its interaction with GATOR2 and the RAG GTPases. Functions upstream of the RAG GTPases and is required to negatively regulate mTORC1 signaling in absence of amino acids. In absence of the KICSTOR complex mTORC1 is constitutively localized to the lysosome and activated. The KICSTOR complex is also probably involved in the regulation of mTORC1 by glucose. The polypeptide is KICSTOR complex protein kaptin (Homo sapiens (Human)).